Consider the following 318-residue polypeptide: NADH-ubiquinone oxidoreductase chain 1 (318 aa).

A run of 8 helical transmembrane segments spans residues 3–23 (FMNLLTTIIPILLAVAFLTLL), 69–89 (VLFIIAPTLALTLALMMWIPL), 102–122 (ILFMLALSSLAVYGIMWSGWA), 146–166 (LAIIILSILLMNGSFALSTLI), 171–191 (HIWLILPSWPLAMMWFISTLA), 222–242 (LFFLAEYANIIMMNALTIILF), 253–273 (ELYTTNFMIKALVLTTLFLWV), and 294–314 (LPLTLVMCMWHVTLPIILAGI).

This sequence belongs to the complex I subunit 1 family. In terms of assembly, core subunit of respiratory chain NADH dehydrogenase (Complex I) which is composed of 45 different subunits.

It is found in the mitochondrion inner membrane. The catalysed reaction is a ubiquinone + NADH + 5 H(+)(in) = a ubiquinol + NAD(+) + 4 H(+)(out). In terms of biological role, core subunit of the mitochondrial membrane respiratory chain NADH dehydrogenase (Complex I) which catalyzes electron transfer from NADH through the respiratory chain, using ubiquinone as an electron acceptor. Essential for the catalytic activity and assembly of complex I. This Cnephaeus nilssonii (Northern bat) protein is NADH-ubiquinone oxidoreductase chain 1 (MT-ND1).